A 172-amino-acid polypeptide reads, in one-letter code: Putative phosphoesterase BT9727_1129 (172 aa).

His34 serves as the catalytic Proton donor. 2 consecutive short sequence motifs (HXTX) follow at residues 34–37 (HITL) and 115–118 (HLTI). His115 acts as the Proton acceptor in catalysis.

This sequence belongs to the 2H phosphoesterase superfamily. YjcG family.

This is Putative phosphoesterase BT9727_1129 from Bacillus thuringiensis subsp. konkukian (strain 97-27).